Reading from the N-terminus, the 434-residue chain is MRRSPKGSPGAVLDLQRRVDQAVSADHAELMTIAKDANTFFGAESVQDPYPLYERMRAAGSVHRIANSDFYAVCGWDAVNEAIGRPEDFSSNLTATMTYTAEGTAKPFEMDPLGGPTHVLATADDPAHAVHRKLVLRHLAAKRIRVMEQFTVQAADRLWVDGMQDGCIEWMGAMANRLPMMVVAELIGLPDPDIAQLVKWGYAATQLLEGLVENDQLVAAGVALMELSGYIFEQFDRAAADPRDNLLGELATACASGELDTLTAQVMMVTLFAAGGESTAALLGSAVWILATRPDIQQQVRANPELLGAFIEETLRYEPPFRGHYRHVRNATTLDGTELPADSHLLLLWGAANRDPAQFEAPGEFRLDRAGGKGHISFGKGAHFCVGAALARLEARIVLRLLLDRTSVIEAADVGGWLPSILVRRIERLELAVQ.

Substrate contacts are provided by Asp124 and His128. Heme is bound by residues Arg132, Arg326, His383, and Cys385.

The protein belongs to the cytochrome P450 family. As to quaternary structure, monomer. It depends on heme as a cofactor.

This chain is Cytochrome P450 144 (cyp144), found in Mycobacterium tuberculosis (strain CDC 1551 / Oshkosh).